A 189-amino-acid chain; its full sequence is Glycerol-3-phosphate acyltransferase (189 aa).

Transmembrane regions (helical) follow at residues 1–21 (MFWS…AIVL), 50–70 (KLAI…VLLA), 81–101 (AWVG…RFQG), 111–131 (MLMA…VLTF), and 151–171 (LLAW…LMIV).

It belongs to the PlsY family. As to quaternary structure, probably interacts with PlsX.

It is found in the cell inner membrane. The catalysed reaction is an acyl phosphate + sn-glycerol 3-phosphate = a 1-acyl-sn-glycero-3-phosphate + phosphate. It functions in the pathway lipid metabolism; phospholipid metabolism. Catalyzes the transfer of an acyl group from acyl-phosphate (acyl-PO(4)) to glycerol-3-phosphate (G3P) to form lysophosphatidic acid (LPA). This enzyme utilizes acyl-phosphate as fatty acyl donor, but not acyl-CoA or acyl-ACP. In Pseudomonas entomophila (strain L48), this protein is Glycerol-3-phosphate acyltransferase.